A 143-amino-acid polypeptide reads, in one-letter code: Nucleoside diphosphate kinase (143 aa).

K11, F59, R87, T93, R104, and N114 together coordinate ATP. H117 (pros-phosphohistidine intermediate) is an active-site residue.

This sequence belongs to the NDK family. As to quaternary structure, homotetramer. Requires Mg(2+) as cofactor.

It is found in the cytoplasm. The enzyme catalyses a 2'-deoxyribonucleoside 5'-diphosphate + ATP = a 2'-deoxyribonucleoside 5'-triphosphate + ADP. It catalyses the reaction a ribonucleoside 5'-diphosphate + ATP = a ribonucleoside 5'-triphosphate + ADP. Functionally, major role in the synthesis of nucleoside triphosphates other than ATP. The ATP gamma phosphate is transferred to the NDP beta phosphate via a ping-pong mechanism, using a phosphorylated active-site intermediate. This chain is Nucleoside diphosphate kinase, found in Azotobacter vinelandii (strain DJ / ATCC BAA-1303).